A 583-amino-acid polypeptide reads, in one-letter code: Long-chain-fatty-acid--AMP ligase FadD26 (583 aa).

This sequence belongs to the ATP-dependent AMP-binding enzyme family.

It carries out the reaction holo-[(phenol)carboxyphthiodiolenone synthase] + a long-chain fatty acid + ATP = a long-chain fatty acyl-[(phenol)carboxyphthiodiolenone synthase] + AMP + diphosphate. The catalysed reaction is eicosanoate + holo-[(phenol)carboxyphthiodiolenone synthase] + ATP = icosanoyl-[(phenol)carboxyphthiodiolenone synthase] + AMP + diphosphate. It catalyses the reaction holo-[(phenol)carboxyphthiodiolenone synthase] + docosanoate + ATP = docosanoyl-[(phenol)carboxyphthiodiolenone synthase] + AMP + diphosphate. It participates in lipid metabolism; fatty acid biosynthesis. Catalyzes the activation of long-chain fatty acids as acyl-adenylates (acyl-AMP), which are then transferred to the multifunctional polyketide synthase PpsA for further chain extension. Catalyzes the adenylation of the long-chain fatty acids eicosanoate (C20) or docosanoate (C22), and potentially the very-long-chain fatty acid lignocerate (C24). Involved in the biosynthesis of phthiocerol dimycocerosate (DIM A) and phthiodiolone dimycocerosate (DIM B). This is Long-chain-fatty-acid--AMP ligase FadD26 (fadD26) from Mycobacterium tuberculosis (strain CDC 1551 / Oshkosh).